The sequence spans 285 residues: Eukaryotic translation initiation factor 3 subunit F-2 (285 aa).

The 135-residue stretch at 11-145 (VVLQPLVLFQ…TRLYCGVEMG (135 aa)) folds into the MPN domain.

It belongs to the eIF-3 subunit F family. Component of the eukaryotic translation initiation factor 3 (eIF-3) complex. The eIF-3 complex interacts with pix.

The protein resides in the cytoplasm. In terms of biological role, component of the eukaryotic translation initiation factor 3 (eIF-3) complex, which is involved in protein synthesis of a specialized repertoire of mRNAs and, together with other initiation factors, stimulates binding of mRNA and methionyl-tRNAi to the 40S ribosome. The eIF-3 complex specifically targets and initiates translation of a subset of mRNAs involved in cell proliferation. The polypeptide is Eukaryotic translation initiation factor 3 subunit F-2 (Drosophila ananassae (Fruit fly)).